The chain runs to 266 residues: Thymidylate synthase (266 aa).

DUMP-binding positions include R21 and 127–128; that span reads RR. The Nucleophile role is filled by C147. Residues 168–171, N179, and 209–211 each bind dUMP; these read RSAD and HIY. Residue D171 coordinates (6R)-5,10-methylene-5,6,7,8-tetrahydrofolate. A265 serves as a coordination point for (6R)-5,10-methylene-5,6,7,8-tetrahydrofolate.

Belongs to the thymidylate synthase family. Bacterial-type ThyA subfamily. As to quaternary structure, homodimer.

Its subcellular location is the cytoplasm. It carries out the reaction dUMP + (6R)-5,10-methylene-5,6,7,8-tetrahydrofolate = 7,8-dihydrofolate + dTMP. It functions in the pathway pyrimidine metabolism; dTTP biosynthesis. Catalyzes the reductive methylation of 2'-deoxyuridine-5'-monophosphate (dUMP) to 2'-deoxythymidine-5'-monophosphate (dTMP) while utilizing 5,10-methylenetetrahydrofolate (mTHF) as the methyl donor and reductant in the reaction, yielding dihydrofolate (DHF) as a by-product. This enzymatic reaction provides an intracellular de novo source of dTMP, an essential precursor for DNA biosynthesis. This is Thymidylate synthase from Brachyspira hyodysenteriae (strain ATCC 49526 / WA1).